The following is a 179-amino-acid chain: Crossover junction endodeoxyribonuclease RuvC (179 aa).

Active-site residues include Asp-14, Glu-74, and Asp-147. Mg(2+) contacts are provided by Asp-14, Glu-74, and Asp-147.

This sequence belongs to the RuvC family. In terms of assembly, homodimer which binds Holliday junction (HJ) DNA. The HJ becomes 2-fold symmetrical on binding to RuvC with unstacked arms; it has a different conformation from HJ DNA in complex with RuvA. In the full resolvosome a probable DNA-RuvA(4)-RuvB(12)-RuvC(2) complex forms which resolves the HJ. The cofactor is Mg(2+).

The protein resides in the cytoplasm. The catalysed reaction is Endonucleolytic cleavage at a junction such as a reciprocal single-stranded crossover between two homologous DNA duplexes (Holliday junction).. Functionally, the RuvA-RuvB-RuvC complex processes Holliday junction (HJ) DNA during genetic recombination and DNA repair. Endonuclease that resolves HJ intermediates. Cleaves cruciform DNA by making single-stranded nicks across the HJ at symmetrical positions within the homologous arms, yielding a 5'-phosphate and a 3'-hydroxyl group; requires a central core of homology in the junction. The consensus cleavage sequence is 5'-(A/T)TT(C/G)-3'. Cleavage occurs on the 3'-side of the TT dinucleotide at the point of strand exchange. HJ branch migration catalyzed by RuvA-RuvB allows RuvC to scan DNA until it finds its consensus sequence, where it cleaves and resolves the cruciform DNA. This Rubrobacter xylanophilus (strain DSM 9941 / JCM 11954 / NBRC 16129 / PRD-1) protein is Crossover junction endodeoxyribonuclease RuvC.